The primary structure comprises 111 residues: Large ribosomal subunit protein uL23 (111 aa).

Belongs to the universal ribosomal protein uL23 family. In terms of assembly, part of the 50S ribosomal subunit. Contacts protein L29, and trigger factor when it is bound to the ribosome.

One of the early assembly proteins it binds 23S rRNA. One of the proteins that surrounds the polypeptide exit tunnel on the outside of the ribosome. Forms the main docking site for trigger factor binding to the ribosome. This is Large ribosomal subunit protein uL23 from Chlamydia abortus (strain DSM 27085 / S26/3) (Chlamydophila abortus).